The sequence spans 192 residues: Phosphoheptose isomerase (192 aa).

The SIS domain occupies 35-192 (LIETLENQGK…CIERHFAHKN (158 aa)). Residue 50–52 (NGG) coordinates substrate. Positions 59 and 63 each coordinate Zn(2+). Residues Glu63, 92 to 93 (ND), 118 to 120 (STS), Ser123, and Gln170 each bind substrate. The Zn(2+) site is built by Gln170 and His178.

The protein belongs to the SIS family. GmhA subfamily. Homotetramer. Zn(2+) is required as a cofactor.

Its subcellular location is the cytoplasm. It carries out the reaction 2 D-sedoheptulose 7-phosphate = D-glycero-alpha-D-manno-heptose 7-phosphate + D-glycero-beta-D-manno-heptose 7-phosphate. It participates in carbohydrate biosynthesis; D-glycero-D-manno-heptose 7-phosphate biosynthesis; D-glycero-alpha-D-manno-heptose 7-phosphate and D-glycero-beta-D-manno-heptose 7-phosphate from sedoheptulose 7-phosphate: step 1/1. It functions in the pathway bacterial outer membrane biogenesis; LPS core biosynthesis. Catalyzes the isomerization of sedoheptulose 7-phosphate in D-glycero-D-manno-heptose 7-phosphate. This chain is Phosphoheptose isomerase, found in Helicobacter pylori (strain ATCC 700392 / 26695) (Campylobacter pylori).